A 136-amino-acid polypeptide reads, in one-letter code: Translation initiation factor 5A (136 aa).

A Hypusine modification is found at Lys-37.

It belongs to the eIF-5A family.

It is found in the cytoplasm. Functions by promoting the formation of the first peptide bond. This chain is Translation initiation factor 5A, found in Thermococcus kodakarensis (strain ATCC BAA-918 / JCM 12380 / KOD1) (Pyrococcus kodakaraensis (strain KOD1)).